The sequence spans 473 residues: MKTQQSFHVVAGFVCFPMSKTSQSRCYSTLRDFLIPPSKQKFVPSSGTYPKGFLAAGAHAGVKESNTQFRDVALICSKTPCSAAAVFTTNKFQAAPVQVSKQVLEAREGADITGVVINSGCANAVTGKGGLEDAKSMSAKVDECNGTPSTSSKGPSTLVMSTGVIGRRLPIKRILNAIPVAHSNLSSTHKAWLNAARSICTTDTFPKLLSRTFTLPSSPNHTYRIAGMTKGAGMIHPNMATLLGILCTDVPISPAALKPLLSHAVSRSFNCISIDGDTSTNDTVALLANGAAGGQTITTPSSPNYAAMQTVLTSFAQSLAQLVVRDGEGATKFVTVRVLNSPSQADARAIASTIARSPLVKTALYGRDANWGRILCAIGYTQGIQVGTVVPERTSVSFKPVDGSEELKLLVNGEPQMVNEERAARILQDEDLEIVVDLGGGEKGGEGMAGEEGIYWFCDFSHEYVTINADYRT.

Substrate is bound by residues threonine 201, lysine 230, threonine 241, glutamate 328, asparagine 468, and threonine 473. The Nucleophile role is filled by threonine 241.

Belongs to the ArgJ family. Heterodimer of an alpha and a beta chain. Post-translationally, the alpha and beta chains are autoproteolytically processed from a single precursor protein within the mitochondrion.

It is found in the mitochondrion matrix. It catalyses the reaction N(2)-acetyl-L-ornithine + L-glutamate = N-acetyl-L-glutamate + L-ornithine. It carries out the reaction L-glutamate + acetyl-CoA = N-acetyl-L-glutamate + CoA + H(+). The protein operates within amino-acid biosynthesis; L-arginine biosynthesis; L-ornithine and N-acetyl-L-glutamate from L-glutamate and N(2)-acetyl-L-ornithine (cyclic): step 1/1. Its pathway is amino-acid biosynthesis; L-arginine biosynthesis; N(2)-acetyl-L-ornithine from L-glutamate: step 1/4. Catalyzes two activities which are involved in the cyclic version of arginine biosynthesis: the synthesis of acetylglutamate from glutamate and acetyl-CoA, and of ornithine by transacetylation between acetylornithine and glutamate. This chain is Arginine biosynthesis bifunctional protein ArgJ, mitochondrial, found in Paracoccidioides lutzii (strain ATCC MYA-826 / Pb01) (Paracoccidioides brasiliensis).